We begin with the raw amino-acid sequence, 171 residues long: Ribosome maturation factor RimM (171 aa).

One can recognise a PRC barrel domain in the interval 96 to 170 (PDSYYHFQLE…TMTVRLPDGL (75 aa)).

This sequence belongs to the RimM family. As to quaternary structure, binds ribosomal protein uS19.

The protein localises to the cytoplasm. Functionally, an accessory protein needed during the final step in the assembly of 30S ribosomal subunit, possibly for assembly of the head region. Essential for efficient processing of 16S rRNA. May be needed both before and after RbfA during the maturation of 16S rRNA. It has affinity for free ribosomal 30S subunits but not for 70S ribosomes. This is Ribosome maturation factor RimM from Heliobacterium modesticaldum (strain ATCC 51547 / Ice1).